A 357-amino-acid chain; its full sequence is tRNA/tmRNA (uracil-C(5))-methyltransferase (357 aa).

Q180, Y209, N214, E230, and D290 together coordinate S-adenosyl-L-methionine. The active-site Nucleophile is the C315. Residue E349 is the Proton acceptor of the active site.

The protein belongs to the class I-like SAM-binding methyltransferase superfamily. RNA M5U methyltransferase family. TrmA subfamily.

The enzyme catalyses uridine(54) in tRNA + S-adenosyl-L-methionine = 5-methyluridine(54) in tRNA + S-adenosyl-L-homocysteine + H(+). It catalyses the reaction uridine(341) in tmRNA + S-adenosyl-L-methionine = 5-methyluridine(341) in tmRNA + S-adenosyl-L-homocysteine + H(+). Dual-specificity methyltransferase that catalyzes the formation of 5-methyluridine at position 54 (m5U54) in all tRNAs, and that of position 341 (m5U341) in tmRNA (transfer-mRNA). In Campylobacter jejuni subsp. jejuni serotype O:23/36 (strain 81-176), this protein is tRNA/tmRNA (uracil-C(5))-methyltransferase.